Reading from the N-terminus, the 241-residue chain is MAAHSSCNFALTNPIISQIDSFSKKKLSVPLYFFSTRKALTNPWLGVVDSSLSLTSPVSALQTNRPRRIHKSAISSLPTANPDLVVSDAKKPKWSWRAIKSFAMGELEARKLKYPNTGTEALLMGILIEGTSFTSKFLRANKIMLYKVREETVKLLGKADMYFFSPEHPPLTEDAQRALDSALDQNLKAGGIGEVMPAHILLGIWSEVESPGHKILATLGFTDEKSKELESFASESGFLDE.

A chloroplast-targeting transit peptide spans 1 to 75; it reads MAAHSSCNFA…PRRIHKSAIS (75 aa). Residues 91 to 237 enclose the Clp R domain; it reads KPKWSWRAIK…ELESFASESG (147 aa). Repeat regions lie at residues 94-159 and 171-237; these read WSWR…LGKA and LTED…SESG.

It belongs to the ClpA/ClpB family. Monomer and homodimer. The dimers monomerize before association to the P-ring. Component of the chloroplastic Clp protease core complex which consist of at least 16 proteins: CLPP4 (3 copies), CLPP5 (3 copies), CLPR4 (2 copies), ClpP1 (1 copy), CLPP6 (1 copy), CLPR2 (1 copy), CLPT1 (1 copy), CLPT2 (1 copy) and 3 copies of CLPP3 and/or CLPR1 and/or CLPR3. Interacts with AHK2. Interacts with CPN21. No interactions with CLPS1.

The protein localises to the plastid. It is found in the chloroplast. Accessory protein regulating the assembly of the plastidial Clp protease system. CLPT1 first binds to the heptameric P-ring containing the CLP3-6 subunits followed by CLPT2, and only then does the P-ring combine with the R-ring composed of the clpP1 and CLPR1-4 subunits. Once the core complex is fully assembled, it then associates to the CLPC chaperone partner to form the functional protease. CLPT2 and CLPT1 are partially redundant. The chain is ATP-dependent Clp protease ATP-binding subunit CLPT2, chloroplastic from Arabidopsis thaliana (Mouse-ear cress).